We begin with the raw amino-acid sequence, 967 residues long: Vitamin B12-dependent ribonucleotide reductase (967 aa).

Residues 1–23 are disordered; it reads MTETASGPARSSRAKGTKAGKGL. Substrate contacts are provided by residues S143, 159–160, G188, 364–368, and 554–558; these read AC, NPCSE, and PTGTI. A disulfide bridge links C160 with C377. The active-site Proton acceptor is the N364. Residue C366 is the Cysteine radical intermediate of the active site. E368 (proton acceptor) is an active-site residue.

This sequence belongs to the ribonucleoside diphosphate reductase class-2 family. Requires adenosylcob(III)alamin as cofactor.

It catalyses the reaction a 2'-deoxyribonucleoside 5'-diphosphate + [thioredoxin]-disulfide + H2O = a ribonucleoside 5'-diphosphate + [thioredoxin]-dithiol. Its function is as follows. Catalyzes the reduction of ribonucleotides to deoxyribonucleotides. May function to provide a pool of deoxyribonucleotide precursors for DNA repair during oxygen limitation and/or for immediate growth after restoration of oxygen. This Streptomyces coelicolor (strain ATCC BAA-471 / A3(2) / M145) protein is Vitamin B12-dependent ribonucleotide reductase (nrdJ).